The following is a 397-amino-acid chain: Cephalotocin receptor 1 (397 aa).

Residues 1-48 are Extracellular-facing; it reads MRYITTHPNEISTQIWNNFSSTEIWSNFSAAKNETQPIRRNQDLANAE. Asn-18, Asn-27, and Asn-33 each carry an N-linked (GlcNAc...) asparagine glycan. The chain crosses the membrane as a helical span at residues 49–69; it reads VITLAVVIIITVIGNSIVLIT. The Cytoplasmic portion of the chain corresponds to 70-91; that stretch reads LFQRRKKLTRMHLFILHLSVTD. Residues 92–112 form a helical membrane-spanning segment; the sequence is LFVAFFNNLPQMIWDITFLFL. At 113–120 the chain is on the extracellular side; sequence GTDLLCRL. A disulfide bond links Cys-118 and Cys-194. The chain crosses the membrane as a helical span at residues 121–141; that stretch reads VTYLQSVAMYASSYVLVATAI. Topologically, residues 142–162 are cytoplasmic; sequence DRYFAICHPLSSHKWTTARVH. A helical membrane pass occupies residues 163–183; it reads VMVFIAWMLSFLFSTPQLFIW. Residues 184–205 lie on the Extracellular side of the membrane; the sequence is SMQFSNIGLTCQATFDPEWTLK. A helical membrane pass occupies residues 206 to 226; it reads FYITWLTVAIWILPTIALTLF. The Cytoplasmic portion of the chain corresponds to 227 to 293; the sequence is YGMMCFAVWK…RGISRAKVRS (67 aa). A helical transmembrane segment spans residues 294–314; the sequence is VALTLSVVACCFICWSPFFVC. The Extracellular segment spans residues 315–331; that stretch reads QMWAAWDENAPYSGAIY. Residues 332–352 traverse the membrane as a helical segment; it reads TILLLLSSLNSCTNPWIYMIF. Topologically, residues 353 to 397 are cytoplasmic; it reads SVFQHRAKTSRFVNDEETTSVTVLSSRNDIRLMSMKKKLEQTARN.

Belongs to the G-protein coupled receptor 1 family. Vasopressin/oxytocin receptor subfamily. As to expression, present in brain, buccal ganglion, gastric ganglion, olfactory lube, peduncle lobe, optical lobe, pancreas, the oviduct and the ovary.

It localises to the cell membrane. Its function is as follows. Acts as a receptor for cephalotocin. The protein is Cephalotocin receptor 1 of Octopus vulgaris (Common octopus).